Consider the following 135-residue polypeptide: MALRNKAFHQLRQLFQQHTARWQHELPDLTKPQYAVMRAIADKPGIEQVALIEAAVSTKATLAEMLARMENRGLVRREHDAADKRRRFVWLTAEGEKVLAAAIPIGDSVDEEFLGRLSAEEQELFMQLVRKMMNT.

One can recognise an HTH marR-type domain in the interval Arg-4–Asn-134. The segment at residues Gln-48–Asn-71 is a DNA-binding region (H-T-H motif).

Involved in the temperature-dependent positive control of flagellum-driven swimming motility and cellular aggregation. Regulates fliC expression by directly interacting with fliC promoter. This chain is Transcriptional regulator HosA (hosA), found in Escherichia coli O127:H6 (strain E2348/69 / EPEC).